Here is a 641-residue protein sequence, read N- to C-terminus: RING finger containing E3 ubiquitin-protein ligase WSV403 (641 aa).

The segment at 329–371 adopts an RING-type; atypical zinc-finger fold; sequence CVGCLYDIEDEKRCYKLPCGHFMHTFCLSNKCSKANFRCVKCF.

The enzyme catalyses S-ubiquitinyl-[E2 ubiquitin-conjugating enzyme]-L-cysteine + [acceptor protein]-L-lysine = [E2 ubiquitin-conjugating enzyme]-L-cysteine + N(6)-ubiquitinyl-[acceptor protein]-L-lysine.. Its pathway is protein modification; protein ubiquitination. Probable E3 ubiquitin-protein ligase which accepts ubiquitin from an E2 ubiquitin-conjugating enzyme in the form of a thioester and then directly transfers the ubiquitin to targeted substrates. The polypeptide is RING finger containing E3 ubiquitin-protein ligase WSV403 (White spot syndrome virus (isolate Shrimp/China/Tongan/1996) (WSSV)).